Here is a 651-residue protein sequence, read N- to C-terminus: ATP-dependent RNA helicase MRH4, mitochondrial (651 aa).

The transit peptide at 1–61 (MLRSSLGSVC…SNARQATRRE (61 aa)) directs the protein to the mitochondrion. Positions 45–56 (SSLSFSTSNARQ) are enriched in polar residues. The segment at 45–137 (SSLSFSTSNA…GGKKLGRDGK (93 aa)) is disordered. 2 stretches are compositionally biased toward basic and acidic residues: residues 72-83 (RVGRSTARDGDK) and 124-137 (NGREGGKKLGRDGK). A Q motif motif is present at residues 167-200 (DSFDQFDLLPQVKDAVLNEALKGMLDIKPTPVQR). The disordered stretch occupies residues 210–241 (TTGARSRWRTKSKPADSGSEAASPDAPPPPRE). The span at 224–233 (ADSGSEAASP) shows a compositional bias: low complexity. Residues 234–445 (DAPPPPREEF…ASRFPNMRRI (212 aa)) enclose the Helicase ATP-binding domain. Residue 247–254 (AETGSGKT) coordinates ATP. Residues 392–395 (DEAD) carry the DEAD box motif. In terms of domain architecture, Helicase C-terminal spans 494-651 (PVKGQVDVRR…ESMFMGQALV (158 aa)).

This sequence belongs to the DEAD box helicase family. MRH4 subfamily.

It localises to the mitochondrion. The enzyme catalyses ATP + H2O = ADP + phosphate + H(+). ATP-binding RNA helicase involved in mitochondrial RNA metabolism. Required for maintenance of mitochondrial DNA. This Pyricularia oryzae (strain 70-15 / ATCC MYA-4617 / FGSC 8958) (Rice blast fungus) protein is ATP-dependent RNA helicase MRH4, mitochondrial (MRH4).